A 249-amino-acid polypeptide reads, in one-letter code: tRNA (guanine-N(1)-)-methyltransferase (249 aa).

S-adenosyl-L-methionine is bound by residues G121 and 141–146; that span reads LGDFVL.

This sequence belongs to the RNA methyltransferase TrmD family. In terms of assembly, homodimer.

The protein resides in the cytoplasm. It catalyses the reaction guanosine(37) in tRNA + S-adenosyl-L-methionine = N(1)-methylguanosine(37) in tRNA + S-adenosyl-L-homocysteine + H(+). Specifically methylates guanosine-37 in various tRNAs. This Cereibacter sphaeroides (strain KD131 / KCTC 12085) (Rhodobacter sphaeroides) protein is tRNA (guanine-N(1)-)-methyltransferase.